The following is a 1207-amino-acid chain: DNA-directed RNA polymerase subunit beta' (1207 aa).

Residues C60, C62, C75, and C78 each contribute to the Zn(2+) site. Positions 450, 452, and 454 each coordinate Mg(2+). Positions 818, 892, 899, and 902 each coordinate Zn(2+).

This sequence belongs to the RNA polymerase beta' chain family. In terms of assembly, the RNAP catalytic core consists of 2 alpha, 1 beta, 1 beta' and 1 omega subunit. When a sigma factor is associated with the core the holoenzyme is formed, which can initiate transcription. Mg(2+) is required as a cofactor. It depends on Zn(2+) as a cofactor.

The catalysed reaction is RNA(n) + a ribonucleoside 5'-triphosphate = RNA(n+1) + diphosphate. Its function is as follows. DNA-dependent RNA polymerase catalyzes the transcription of DNA into RNA using the four ribonucleoside triphosphates as substrates. In Lactococcus lactis subsp. cremoris (strain MG1363), this protein is DNA-directed RNA polymerase subunit beta'.